The chain runs to 315 residues: Ribosomal RNA small subunit methyltransferase H (315 aa).

S-adenosyl-L-methionine contacts are provided by residues 37-39, Asp57, Phe83, Asp105, and Gln112; that span reads GGH.

The protein belongs to the methyltransferase superfamily. RsmH family.

It is found in the cytoplasm. The catalysed reaction is cytidine(1402) in 16S rRNA + S-adenosyl-L-methionine = N(4)-methylcytidine(1402) in 16S rRNA + S-adenosyl-L-homocysteine + H(+). In terms of biological role, specifically methylates the N4 position of cytidine in position 1402 (C1402) of 16S rRNA. This Pseudomonas putida (strain ATCC 700007 / DSM 6899 / JCM 31910 / BCRC 17059 / LMG 24140 / F1) protein is Ribosomal RNA small subunit methyltransferase H.